The sequence spans 156 residues: Persephin (156 aa).

A signal peptide spans 1–21 (MAAGRLRILFLLLLSLHLGLG). 3 disulfides stabilise this stretch: cysteine 66–cysteine 124, cysteine 93–cysteine 152, and cysteine 97–cysteine 154.

It belongs to the TGF-beta family. GDNF subfamily. In terms of assembly, homodimer; disulfide-linked. Interacts with GFRA4 coreceptor and RET: forms a 2:2:2 ternary complex composed of PSPN ligand, GFRA4 and RET receptor. In terms of tissue distribution, expressed at low levels in substantia nigra. Cochlea.

Its subcellular location is the secreted. Functionally, growth factor that exhibits neurotrophic activity on mesencephalic dopaminergic and motor neurons. Acts by binding to its coreceptor, GFRA4, leading to autophosphorylation and activation of the RET receptor. The sequence is that of Persephin from Rattus norvegicus (Rat).